The chain runs to 262 residues: MNSSFSAPAKKSLGQHFLADRYYIDRIVQAVDPRAGQHLVEIGPGQGAITFPLLRKHGALTVIEFDRDLIAPLTEAAAPIGALSIIHRDVLSVDFTALADGTPIRLVGNLPYNISSPILFHALDHAAVVADMHFMLQKEVVDRMAAGPGSKVYGRLSVMLQAYCDVTALFVVPPGAFRPPPKVDSAVVRLVPRDPATVHINDRRRFADVVRAGFGQRRKTLRNALSTVCEPAHFEAAQVRPDARAEQLEVADFIRLANVEPA.

Residues His-16, Leu-18, Gly-43, Glu-64, Asp-89, and Asn-109 each contribute to the S-adenosyl-L-methionine site.

The protein belongs to the class I-like SAM-binding methyltransferase superfamily. rRNA adenine N(6)-methyltransferase family. RsmA subfamily.

The protein localises to the cytoplasm. The enzyme catalyses adenosine(1518)/adenosine(1519) in 16S rRNA + 4 S-adenosyl-L-methionine = N(6)-dimethyladenosine(1518)/N(6)-dimethyladenosine(1519) in 16S rRNA + 4 S-adenosyl-L-homocysteine + 4 H(+). Specifically dimethylates two adjacent adenosines (A1518 and A1519) in the loop of a conserved hairpin near the 3'-end of 16S rRNA in the 30S particle. May play a critical role in biogenesis of 30S subunits. The sequence is that of Ribosomal RNA small subunit methyltransferase A from Xanthomonas oryzae pv. oryzae (strain MAFF 311018).